A 235-amino-acid polypeptide reads, in one-letter code: Protein YIP4 (235 aa).

5 helical membrane passes run 89–109 (ISANCDLWAPLAFIILYSLFV), 114–134 (SLFSSLFVSSWFILLVMALHL), 145–165 (LISYISISGYCLFPQVLNALV), 186–206 (VLSLVKLVVMALCLMWSVAAV), and 215–235 (IIEIYPLALCLFGMAWLSTIL).

It belongs to the YIP1 family. Interacts with TVP18, TVP23, YIP1 and YIP5. Interacts with SEC4, YPT1, YPT6, YPT7, YPT10, YPT11, YPT31, YPT32 and YPT52; These proteins are all Rab GTPases.

It localises to the golgi apparatus membrane. Functionally, may be involved in proper membrane localization of Rab GTPases. The sequence is that of Protein YIP4 (YIP4) from Saccharomyces cerevisiae (strain ATCC 204508 / S288c) (Baker's yeast).